Consider the following 212-residue polypeptide: Thymidylate kinase (212 aa).

10-17 is an ATP binding site; it reads GIDGCGKT.

The protein belongs to the thymidylate kinase family.

It catalyses the reaction dTMP + ATP = dTDP + ADP. In terms of biological role, phosphorylation of dTMP to form dTDP in both de novo and salvage pathways of dTTP synthesis. This Prochlorococcus marinus (strain MIT 9312) protein is Thymidylate kinase.